The primary structure comprises 193 residues: Fe/S biogenesis protein NfuA (193 aa).

Cysteine 151 and cysteine 154 together coordinate [4Fe-4S] cluster.

It belongs to the NfuA family. Homodimer. Requires [4Fe-4S] cluster as cofactor.

Involved in iron-sulfur cluster biogenesis. Binds a 4Fe-4S cluster, can transfer this cluster to apoproteins, and thereby intervenes in the maturation of Fe/S proteins. Could also act as a scaffold/chaperone for damaged Fe/S proteins. In Buchnera aphidicola subsp. Cinara cedri (strain Cc), this protein is Fe/S biogenesis protein NfuA.